A 187-amino-acid polypeptide reads, in one-letter code: MATTADFKNGLVLKVDGKLQQIVEFQHVKPGKGPAFVRTKLKDVVSGKTIDKTWNAGVKVETATVDRRDMTYLYNDGTSFVLMDEKTYDQIELAPHLMGDGAKFLLENTSVQVSFHEGEPLFAELPVSVELKIEHTDPGLQGDRSTGGSKPATLETGAEIQVPLFLETGNVVKVDTRTGEYLSRVNN.

Belongs to the elongation factor P family.

The protein localises to the cytoplasm. Its pathway is protein biosynthesis; polypeptide chain elongation. Involved in peptide bond synthesis. Stimulates efficient translation and peptide-bond synthesis on native or reconstituted 70S ribosomes in vitro. Probably functions indirectly by altering the affinity of the ribosome for aminoacyl-tRNA, thus increasing their reactivity as acceptors for peptidyl transferase. The chain is Elongation factor P from Corynebacterium jeikeium (strain K411).